A 502-amino-acid polypeptide reads, in one-letter code: 2-isopropylmalate synthase (502 aa).

Residues D1, H189, H191, and N225 each coordinate Mn(2+). The Pyruvate carboxyltransferase domain occupies 1-254; sequence DGEQALQASL…STNINHKEIY (254 aa). The tract at residues 379-502 is regulatory domain; the sequence is CLKFFSVQSI…VNKNLKNLKK (124 aa).

The protein belongs to the alpha-IPM synthase/homocitrate synthase family. LeuA type 1 subfamily. Homodimer. Mn(2+) serves as cofactor.

It is found in the cytoplasm. It carries out the reaction 3-methyl-2-oxobutanoate + acetyl-CoA + H2O = (2S)-2-isopropylmalate + CoA + H(+). It participates in amino-acid biosynthesis; L-leucine biosynthesis; L-leucine from 3-methyl-2-oxobutanoate: step 1/4. Catalyzes the condensation of the acetyl group of acetyl-CoA with 3-methyl-2-oxobutanoate (2-ketoisovalerate) to form 3-carboxy-3-hydroxy-4-methylpentanoate (2-isopropylmalate). The protein is 2-isopropylmalate synthase of Buchnera aphidicola subsp. Uroleucon sonchi.